The primary structure comprises 224 residues: EEF1A lysine methyltransferase 3 (224 aa).

S-adenosyl-L-methionine is bound by residues W58, 84-86, D105, W134, and A151; that span reads GAG.

The protein belongs to the methyltransferase superfamily. METTL21 family.

It is found in the cytoplasm. The protein resides in the cytoskeleton. Its subcellular location is the microtubule organizing center. It localises to the centrosome. It catalyses the reaction L-lysyl-[protein] + 3 S-adenosyl-L-methionine = N(6),N(6),N(6)-trimethyl-L-lysyl-[protein] + 3 S-adenosyl-L-homocysteine + 3 H(+). The enzyme catalyses L-lysyl-[protein] + S-adenosyl-L-methionine = N(6)-methyl-L-lysyl-[protein] + S-adenosyl-L-homocysteine + H(+). It carries out the reaction N(6)-methyl-L-lysyl-[protein] + S-adenosyl-L-methionine = N(6),N(6)-dimethyl-L-lysyl-[protein] + S-adenosyl-L-homocysteine + H(+). The catalysed reaction is N(6),N(6)-dimethyl-L-lysyl-[protein] + S-adenosyl-L-methionine = N(6),N(6),N(6)-trimethyl-L-lysyl-[protein] + S-adenosyl-L-homocysteine + H(+). Protein-lysine methyltransferase that selectively mono-, di- and trimethylates 'Lys-165' of the translation elongation factors EEF1A1 and EEF1A2 in an aminoacyl-tRNA and GTP-dependent manner. EEF1A1 methylation by EEF1AKMT3 is dynamic as well as inducible by stress conditions, such as ER-stress, and plays a regulatory role on mRNA translation. In Xenopus tropicalis (Western clawed frog), this protein is EEF1A lysine methyltransferase 3.